We begin with the raw amino-acid sequence, 463 residues long: Bifunctional protein HldE (463 aa).

The tract at residues Met1 to Thr311 is ribokinase. An ATP-binding site is contributed by Asn191–Glu194. The active site involves Asp260. Residues Phe334–Asp463 are cytidylyltransferase.

The protein in the N-terminal section; belongs to the carbohydrate kinase PfkB family. In the C-terminal section; belongs to the cytidylyltransferase family. Homodimer.

The catalysed reaction is D-glycero-beta-D-manno-heptose 7-phosphate + ATP = D-glycero-beta-D-manno-heptose 1,7-bisphosphate + ADP + H(+). The enzyme catalyses D-glycero-beta-D-manno-heptose 1-phosphate + ATP + H(+) = ADP-D-glycero-beta-D-manno-heptose + diphosphate. The protein operates within nucleotide-sugar biosynthesis; ADP-L-glycero-beta-D-manno-heptose biosynthesis; ADP-L-glycero-beta-D-manno-heptose from D-glycero-beta-D-manno-heptose 7-phosphate: step 1/4. It functions in the pathway nucleotide-sugar biosynthesis; ADP-L-glycero-beta-D-manno-heptose biosynthesis; ADP-L-glycero-beta-D-manno-heptose from D-glycero-beta-D-manno-heptose 7-phosphate: step 3/4. Its function is as follows. Catalyzes the phosphorylation of D-glycero-D-manno-heptose 7-phosphate at the C-1 position to selectively form D-glycero-beta-D-manno-heptose-1,7-bisphosphate. Functionally, catalyzes the ADP transfer from ATP to D-glycero-beta-D-manno-heptose 1-phosphate, yielding ADP-D-glycero-beta-D-manno-heptose. This is Bifunctional protein HldE from Helicobacter pylori (strain Shi470).